The sequence spans 658 residues: Threonine--tRNA ligase (658 aa).

The region spanning 1–64 is the TGS domain; sequence MSNTVSLQFP…GASGKLEIIT (64 aa). Residues 246–548 are catalytic; sequence DHRRLGREMD…LIENFAGHMP (303 aa). 3 residues coordinate Zn(2+): Cys343, His394, and His525.

Belongs to the class-II aminoacyl-tRNA synthetase family. As to quaternary structure, homodimer. Zn(2+) serves as cofactor.

The protein localises to the cytoplasm. It catalyses the reaction tRNA(Thr) + L-threonine + ATP = L-threonyl-tRNA(Thr) + AMP + diphosphate + H(+). Catalyzes the attachment of threonine to tRNA(Thr) in a two-step reaction: L-threonine is first activated by ATP to form Thr-AMP and then transferred to the acceptor end of tRNA(Thr). Also edits incorrectly charged L-seryl-tRNA(Thr). The sequence is that of Threonine--tRNA ligase from Brucella abortus (strain S19).